A 232-amino-acid polypeptide reads, in one-letter code: 5'-methylthioadenosine/S-adenosylhomocysteine nucleosidase (232 aa).

Glu-12 acts as the Proton acceptor in catalysis. Substrate contacts are provided by residues Gly-78, Ile-152, and 173–174 (ME). Asp-197 (proton donor) is an active-site residue.

It belongs to the PNP/UDP phosphorylase family. MtnN subfamily. As to quaternary structure, homodimer.

It carries out the reaction S-adenosyl-L-homocysteine + H2O = S-(5-deoxy-D-ribos-5-yl)-L-homocysteine + adenine. The catalysed reaction is S-methyl-5'-thioadenosine + H2O = 5-(methylsulfanyl)-D-ribose + adenine. The enzyme catalyses 5'-deoxyadenosine + H2O = 5-deoxy-D-ribose + adenine. It functions in the pathway amino-acid biosynthesis; L-methionine biosynthesis via salvage pathway; S-methyl-5-thio-alpha-D-ribose 1-phosphate from S-methyl-5'-thioadenosine (hydrolase route): step 1/2. In terms of biological role, catalyzes the irreversible cleavage of the glycosidic bond in both 5'-methylthioadenosine (MTA) and S-adenosylhomocysteine (SAH/AdoHcy) to adenine and the corresponding thioribose, 5'-methylthioribose and S-ribosylhomocysteine, respectively. Also cleaves 5'-deoxyadenosine, a toxic by-product of radical S-adenosylmethionine (SAM) enzymes, into 5-deoxyribose and adenine. Thus, is required for in vivo function of the radical SAM enzymes biotin synthase and lipoic acid synthase, that are inhibited by 5'-deoxyadenosine accumulation. The protein is 5'-methylthioadenosine/S-adenosylhomocysteine nucleosidase of Shigella boydii serotype 4 (strain Sb227).